Reading from the N-terminus, the 431-residue chain is Tryptophan--tRNA ligase (431 aa).

Residues 12–14 (TPS) and 20–21 (GN) each bind ATP. Positions 13–21 (PSGTPHLGN) match the 'HIGH' region motif. Asp-145 lines the L-tryptophan pocket. Residues 157–159 (GRD), Leu-197, and 204–208 (KMSKS) contribute to the ATP site. The 'KMSKS' region motif lies at 204-208 (KMSKS).

It belongs to the class-I aminoacyl-tRNA synthetase family. Homodimer.

The protein localises to the cytoplasm. It carries out the reaction tRNA(Trp) + L-tryptophan + ATP = L-tryptophyl-tRNA(Trp) + AMP + diphosphate + H(+). In terms of biological role, catalyzes the attachment of tryptophan to tRNA(Trp). This chain is Tryptophan--tRNA ligase, found in Xanthomonas campestris pv. campestris (strain ATCC 33913 / DSM 3586 / NCPPB 528 / LMG 568 / P 25).